The sequence spans 615 residues: Dihydroxy-acid dehydratase (615 aa).

D81 lines the Mg(2+) pocket. [2Fe-2S] cluster is bound at residue C122. 2 residues coordinate Mg(2+): D123 and K124. Position 124 is an N6-carboxylysine (K124). Residue C195 coordinates [2Fe-2S] cluster. Mg(2+) is bound at residue E491. S517 (proton acceptor) is an active-site residue.

The protein belongs to the IlvD/Edd family. Homodimer. Requires [2Fe-2S] cluster as cofactor. Mg(2+) serves as cofactor.

It catalyses the reaction (2R)-2,3-dihydroxy-3-methylbutanoate = 3-methyl-2-oxobutanoate + H2O. The catalysed reaction is (2R,3R)-2,3-dihydroxy-3-methylpentanoate = (S)-3-methyl-2-oxopentanoate + H2O. Its pathway is amino-acid biosynthesis; L-isoleucine biosynthesis; L-isoleucine from 2-oxobutanoate: step 3/4. The protein operates within amino-acid biosynthesis; L-valine biosynthesis; L-valine from pyruvate: step 3/4. In terms of biological role, functions in the biosynthesis of branched-chain amino acids. Catalyzes the dehydration of (2R,3R)-2,3-dihydroxy-3-methylpentanoate (2,3-dihydroxy-3-methylvalerate) into 2-oxo-3-methylpentanoate (2-oxo-3-methylvalerate) and of (2R)-2,3-dihydroxy-3-methylbutanoate (2,3-dihydroxyisovalerate) into 2-oxo-3-methylbutanoate (2-oxoisovalerate), the penultimate precursor to L-isoleucine and L-valine, respectively. In Novosphingobium aromaticivorans (strain ATCC 700278 / DSM 12444 / CCUG 56034 / CIP 105152 / NBRC 16084 / F199), this protein is Dihydroxy-acid dehydratase.